A 1034-amino-acid chain; its full sequence is Protein ITPRID1 (1034 aa).

3 disordered regions span residues 223 to 290 (KTQQ…PTKP), 442 to 486 (QVSS…KSMT), and 624 to 678 (QSSL…SSWS). 2 stretches are compositionally biased toward polar residues: residues 443–453 (VSSMTGSQSPT) and 465–476 (HSPASQQDSLQE). Low complexity predominate over residues 477–486 (SYGSKSKSMT). Residues 669 to 678 (TDSNAASSWS) show a composition bias toward polar residues. The stretch at 843 to 902 (EMETMKMVCQSFREHLEEIEQHFMGQQALYPRDMSEEEREEAEYLRTLREALRQQVAELA) forms a coiled coil.

The chain is Protein ITPRID1 (Itprid1) from Mus musculus (Mouse).